The sequence spans 429 residues: Serine/threonine-protein kinase BGLF4 (429 aa).

A disordered region spans residues M1–P27. In terms of domain architecture, Protein kinase spans M1 to L409. Positions S14–S23 are enriched in low complexity. Residues K36–I40 are SUMO interaction motif. Residues L110–D118 and E128 each bind ATP. D195 acts as the Proton acceptor in catalysis. The SUMO interaction motif stretch occupies residues V344 to L350.

This sequence belongs to the protein kinase superfamily. Ser/Thr protein kinase family. In terms of assembly, interacts with host NUP62 and NUP153; this interaction plays a role in nuclear targeting of BGLF4. Interacts with host SUMO1 and SUMO2.

Its subcellular location is the virion tegument. The protein localises to the host nucleus. The catalysed reaction is L-seryl-[protein] + ATP = O-phospho-L-seryl-[protein] + ADP + H(+). It carries out the reaction L-threonyl-[protein] + ATP = O-phospho-L-threonyl-[protein] + ADP + H(+). Functionally, plays many key roles by phosphorylating several proteins including the viral DNA processivity factor BMRF1, EBNA1 or EBNA2. Modifies the host nuclear envelope structure and induces the redistribution of nuclear envelope-associated proteins by phosphorylating host nucleoporins. Subsequently, promotes the nuclear transport of EBV lytic proteins. Required for efficient lytic DNA replication and release of nucleocapsids from the nucleus. Contributes to the compaction of host cell chromatin in cells undergoing lytic replication, presumably by phosphorylating the host condensin complex and host TOP2A. Induces disassembly of the nuclear lamina by phosphorylating with host LMNA. Phosphorylates substrates involved in capsid assembly and DNA packaging. Facilitates the switch from latent to lytic DNA replication by down-regulating EBNA1 replication function. Phosphorylates the viral immediate-early protein BZLF1 and inhibits its sumoylation by interacting with host SUMO1 and SUMO2. Phosphorylates also host SAMHD1 and thereby counteracts its antiviral effect by reducing its dNTP hydrolase activity. This chain is Serine/threonine-protein kinase BGLF4, found in Epstein-Barr virus (strain AG876) (HHV-4).